The following is a 436-amino-acid chain: UDP-N-acetylmuramate--L-alanine ligase (436 aa).

111–117 (GTHGKTS) contacts ATP.

This sequence belongs to the MurCDEF family.

It is found in the cytoplasm. The enzyme catalyses UDP-N-acetyl-alpha-D-muramate + L-alanine + ATP = UDP-N-acetyl-alpha-D-muramoyl-L-alanine + ADP + phosphate + H(+). The protein operates within cell wall biogenesis; peptidoglycan biosynthesis. Functionally, cell wall formation. In Lactiplantibacillus plantarum (strain ATCC BAA-793 / NCIMB 8826 / WCFS1) (Lactobacillus plantarum), this protein is UDP-N-acetylmuramate--L-alanine ligase.